The primary structure comprises 151 residues: MGFDPVTFAKIKKISIDSNADGYIDYANQAGNADKLDGKDASDFLSIDSFKDLKEDNGYIKFPTGLIMQWGKVYVNNTTSYQEIPVNFTIEFPNKCLNVFASIYEGSGVDNDYIKCITRIANITTKGCVVCITDISGASGDVGFFWFAIGY.

This is an uncharacterized protein from Methanocaldococcus jannaschii (strain ATCC 43067 / DSM 2661 / JAL-1 / JCM 10045 / NBRC 100440) (Methanococcus jannaschii).